The following is a 92-amino-acid chain: Putative pterin-4-alpha-carbinolamine dehydratase (92 aa).

This sequence belongs to the pterin-4-alpha-carbinolamine dehydratase family.

It carries out the reaction (4aS,6R)-4a-hydroxy-L-erythro-5,6,7,8-tetrahydrobiopterin = (6R)-L-erythro-6,7-dihydrobiopterin + H2O. The protein is Putative pterin-4-alpha-carbinolamine dehydratase of Acidobacterium capsulatum (strain ATCC 51196 / DSM 11244 / BCRC 80197 / JCM 7670 / NBRC 15755 / NCIMB 13165 / 161).